Consider the following 345-residue polypeptide: Annexin A9 (345 aa).

4 Annexin repeats span residues 41-112 (FSVD…ALLQ), 113-184 (PAAQ…ALSK), 197-266 (NLEE…SLAS), and 270-341 (NTAL…ALCR).

The protein belongs to the annexin family. Homodimer.

In terms of biological role, may act as a low affinity receptor for acetylcholine. This is Annexin A9 (Anxa9) from Mus musculus (Mouse).